We begin with the raw amino-acid sequence, 2513 residues long: Polyprotein P1234 (2513 aa).

The region spanning 28-259 is the Alphavirus-like MT domain; sequence EPKQVTPNDH…ESRKLLQSWH (232 aa). The interval 244-263 is nsP1 membrane-binding; it reads GSTLYPESRKLLQSWHLPSV. S-palmitoyl cysteine; by host attachment occurs at residues cysteine 417 and cysteine 419. Positions 690–842 constitute a (+)RNA virus helicase ATP-binding domain; sequence DLTSPPYHEF…HNICTQVYHK (153 aa). 721 to 728 contacts a ribonucleoside 5'-triphosphate; the sequence is GVPGSGKS. In terms of domain architecture, (+)RNA virus helicase C-terminal spans 843–991; it reads SISRRCTLPV…IKEWEAEHAS (149 aa). The region spanning 1004-1327 is the Peptidase C9 domain; that stretch reads DTFQNKANVC…NQLNAVYAGL (324 aa). The tract at residues 1005 to 1024 is nucleolus localization signal; that stretch reads TFQNKANVCWAKCLVPILDT. The active-site For cysteine protease nsP2 activity is the cysteine 1013. Positions 1058–1067 match the Nuclear export signal motif; that stretch reads TRIYGVDLDS. Histidine 1083 (for cysteine protease nsP2 activity) is an active-site residue. The short motif at 1182-1186 is the Nuclear localization signal element; sequence PTKRV. 6 residues coordinate ADP-D-ribose: aspartate 1343, asparagine 1357, glycine 1365, glycine 1445, valine 1446, and tyrosine 1447. Zn(2+) is bound by residues cysteine 1595, cysteine 1597, cysteine 1620, and cysteine 1638. 2 consecutive short sequence motifs (FGDF; binding to host G3BP1) follow at residues 1851 to 1854 and 1869 to 1872; these read FGDF. One can recognise a RdRp catalytic domain in the interval 2267-2382; the sequence is DAVLETDIAS…HGVVSDALMA (116 aa).

As to quaternary structure, interacts with non-structural protein 3. Interacts with RNA-directed RNA polymerase nsP4. Interacts with protease nsP2. interacts with itself. In terms of assembly, interacts with mRNA-capping enzyme nsP1. Interacts with host DDX1. Interacts with host DDX3. Interacts (via C-terminus) with host G3BP1; this interaction inhibits the formation of host stress granules on viral mRNAs and the nsp3-G3BP1 complexes bind viral RNAs and probably orchestrate the assembly of viral replication complexes. Interacts (via C-terminus) with host G3BP2; this interaction inhibits the formation of host stress granules on viral mRNAs and the nsp3-G3BP2 complexes bind viral RNAs and probably orchestrate the assembly of viral replication complexes. Interacts with mRNA-capping enzyme nsP1. Interacts with protease nsP2. interacts with itself. As to quaternary structure, interacts with RNA-directed RNA polymerase nsP4. Interacts with mRNA-capping enzyme nsP1. Interacts with KPNA1/karyopherin-alpha1; this interaction probably allows the active transport of protease nsP2 into the host nucleus. Requires Mg(2+) as cofactor. Mn(2+) is required as a cofactor. Specific enzymatic cleavages in vivo yield mature proteins. The processing of the polyprotein is temporally regulated. In early stages (1.7 hpi), P1234 is first cleaved in trans through its nsP2 protease activity, releasing P123 and nsP4, which associate to form the early replication complex. At the same time, P1234 is also cut at the nsP1/nsP2 site early in infection but with lower efficiency. After replication of the viral minus-strand RNAs (4 hpi), the polyproteins are cut at the nsP1/nsP2 and nsP2/nsP3 sites very efficiently, preventing accumulation of P123 and P1234 and allowing the formation of the late replication complex. NsP3/nsP4 site is not cleaved anymore and P34 is produced rather than nsP4. Post-translationally, specific enzymatic cleavages in vivo yield mature proteins. The processing of the polyprotein is temporally regulated. In early stages (1.7 hpi), P123 is cleaved at the nsP1/nsP2 site with low efficiency. After replication of the viral minus-strand RNAs (4 hpi), the polyproteins are cut at the nsP1/nsP2 and nsP2/nsP3 sites very efficiently, preventing accumulation of P123 and allowing the formation of the late replication complex. In terms of processing, palmitoylated by host palmitoyltransferases ZDHHC2 and ZDHHC19. Phosphorylated by host on serines and threonines. Post-translationally, ubiquitinated; targets the protein for rapid degradation via the ubiquitin system. Nsp4 is present in extremely low quantities due to low frequency of translation through the amber stop-codon and the degradation by the ubiquitin pathway.

It localises to the host cytoplasmic vesicle membrane. The protein resides in the host cell membrane. It is found in the host cell projection. Its subcellular location is the host filopodium. The protein localises to the host nucleus. It localises to the host cytoplasm. The catalysed reaction is GTP + S-adenosyl-L-methionine = N(7)-methyl-GTP + S-adenosyl-L-homocysteine. It carries out the reaction N(7)-methyl-GTP + L-histidyl-[protein] = N(tele)-(N(7)-methylguanosine 5'-phospho)-L-histidyl-[protein] + diphosphate. The enzyme catalyses N(tele)-(N(7)-methylguanosine 5'-phospho)-L-histidyl-[protein] + a 5'-end diphospho-(purine-ribonucleoside) in mRNA + H(+) = a 5'-end (N(7)-methyl 5'-triphosphoguanosine)-(purine-ribonucleoside) in mRNA + L-histidyl-[protein]. It catalyses the reaction a 5'-end triphospho-ribonucleoside in mRNA + H2O = a 5'-end diphospho-ribonucleoside in mRNA + phosphate + H(+). The catalysed reaction is a ribonucleoside 5'-triphosphate + H2O = a ribonucleoside 5'-diphosphate + phosphate + H(+). It carries out the reaction ATP + H2O = ADP + phosphate + H(+). The enzyme catalyses RNA(n) + a ribonucleoside 5'-triphosphate = RNA(n+1) + diphosphate. It catalyses the reaction 4-O-(ADP-D-ribosyl)-L-aspartyl-[protein] + H2O = L-aspartyl-[protein] + ADP-D-ribose + H(+). The catalysed reaction is 5-O-(ADP-D-ribosyl)-L-glutamyl-[protein] + H2O = L-glutamyl-[protein] + ADP-D-ribose + H(+). It carries out the reaction RNA(n) + ATP = RNA(n)-3'-adenine ribonucleotide + diphosphate. The enzyme catalyses ADP-alpha-D-ribose 1''-phosphate + H2O = ADP-D-ribose + phosphate. Its function is as follows. Inactive precursor of the viral replicase, which is activated by cleavages carried out by the viral protease nsP2. The early replication complex formed by the polyprotein P123 and nsP4 synthesizes minus-strand RNAs. As soon P123 is cleaved into mature proteins, the plus-strand RNAs synthesis begins. Functionally, cytoplasmic capping enzyme that catalyzes two virus-specific reactions: methyltransferase and nsP1 guanylyltransferase. mRNA-capping is necessary since all viral RNAs are synthesized in the cytoplasm, and host capping enzymes are restricted to the nucleus. The enzymatic reaction involves a covalent link between 7-methyl-GMP and nsP1, whereas eukaryotic capping enzymes form a covalent complex only with GMP. nsP1 capping consists in the following reactions: GTP is first methylated into 7-methyl-GMP and then is covalently linked to nsP1 to form the m7GMp-nsP1 complex from which 7-methyl-GMP complex is transferred to the mRNA to create the cap structure. NsP1 is also needed for the initiation of the minus-strand RNAs synthesis. Probably serves as a membrane anchor for the replication complex composed of nsP1-nsP4. Palmitoylated nsP1 is remodeling host cell cytoskeleton, and induces filopodium-like structure formation at the surface of the host cell. In terms of biological role, multifunctional protein whose N-terminus is part of the RNA polymerase complex and displays NTPase, RNA triphosphatase and helicase activities. NTPase and RNA triphosphatase are involved in viral RNA capping and helicase keeps a check on the dsRNA replication intermediates. The C-terminus harbors a protease that specifically cleaves the polyproteins and releases the mature proteins. Required for the shutoff of minus-strand RNAs synthesis. Specifically inhibits the host IFN response by promoting the nuclear export of host STAT1. Also inhibits host transcription by inducing the rapid proteasome-dependent degradation of POLR2A, a catalytic subunit of the RNAPII complex. The resulting inhibition of cellular protein synthesis serves to ensure maximal viral gene expression and to evade host immune response. Its function is as follows. Seems to be essential for minus-strand RNAs and subgenomic 26S mRNAs synthesis. Displays mono-ADP-ribosylhydrolase activity. ADP-ribosylation is a post-translational modification that controls various processes of the host cell and the virus probably needs to revert it for optimal viral replication. Binds proteins of G3BP family and sequesters them into the viral RNA replication complexes thereby inhibiting the formation of host stress granules on viral mRNAs. The nsp3-G3BP complexes bind viral RNAs and probably orchestrate the assembly of viral replication complexes, thanks to the ability of G3BP family members to self-assemble and bind DNA. RNA dependent RNA polymerase. Replicates genomic and antigenomic RNA by recognizing replications specific signals. The early replication complex formed by the polyprotein P123 and nsP4 synthesizes minus-strand RNAs. The late replication complex composed of fully processed nsP1-nsP4 is responsible for the production of genomic and subgenomic plus-strand RNAs. In Anopheles (Human), this protein is Polyprotein P1234.